Here is a 198-residue protein sequence, read N- to C-terminus: Molybdenum cofactor guanylyltransferase (198 aa).

Residues 14–16, lysine 27, aspartate 73, and aspartate 103 each bind GTP; that span reads LAG. Residue aspartate 103 coordinates Mg(2+).

Belongs to the MobA family. Monomer. Mg(2+) serves as cofactor.

The protein localises to the cytoplasm. The enzyme catalyses Mo-molybdopterin + GTP + H(+) = Mo-molybdopterin guanine dinucleotide + diphosphate. Functionally, transfers a GMP moiety from GTP to Mo-molybdopterin (Mo-MPT) cofactor (Moco or molybdenum cofactor) to form Mo-molybdopterin guanine dinucleotide (Mo-MGD) cofactor. The polypeptide is Molybdenum cofactor guanylyltransferase (Pseudomonas aeruginosa (strain LESB58)).